A 295-amino-acid chain; its full sequence is Large ribosomal subunit protein uL18 (295 aa).

Residues 251–261 (PTPKKKTDFAG) are compositionally biased toward basic and acidic residues. Residues 251-295 (PTPKKKTDFAGKTKRWNRKKMTFSQRRDRVKQKKASFLRAKQQEG) are disordered. Residues 262–271 (KTKRWNRKKM) show a composition bias toward basic residues.

Belongs to the universal ribosomal protein uL18 family. In terms of assembly, component of the large ribosomal subunit (LSU).

The protein localises to the cytoplasm. Its subcellular location is the nucleus. In terms of biological role, component of the ribosome, a large ribonucleoprotein complex responsible for the synthesis of proteins in the cell. The small ribosomal subunit (SSU) binds messenger RNAs (mRNAs) and translates the encoded message by selecting cognate aminoacyl-transfer RNA (tRNA) molecules. The large subunit (LSU) contains the ribosomal catalytic site termed the peptidyl transferase center (PTC), which catalyzes the formation of peptide bonds, thereby polymerizing the amino acids delivered by tRNAs into a polypeptide chain. The nascent polypeptides leave the ribosome through a tunnel in the LSU and interact with protein factors that function in enzymatic processing, targeting, and the membrane insertion of nascent chains at the exit of the ribosomal tunnel. The sequence is that of Large ribosomal subunit protein uL18 (RPL5) from Styela clava (Sea squirt).